A 911-amino-acid polypeptide reads, in one-letter code: Protein translocase subunit SecA (911 aa).

ATP-binding positions include Gln87, 105–109 (GEGKT), and Asp510. Zn(2+)-binding residues include Cys896, Cys898, Cys907, and His908.

This sequence belongs to the SecA family. In terms of assembly, monomer and homodimer. Part of the essential Sec protein translocation apparatus which comprises SecA, SecYEG and auxiliary proteins SecDF-YajC and YidC. Requires Zn(2+) as cofactor.

The protein resides in the cell inner membrane. The protein localises to the cytoplasm. It carries out the reaction ATP + H2O + cellular proteinSide 1 = ADP + phosphate + cellular proteinSide 2.. Its function is as follows. Part of the Sec protein translocase complex. Interacts with the SecYEG preprotein conducting channel. Has a central role in coupling the hydrolysis of ATP to the transfer of proteins into and across the cell membrane, serving both as a receptor for the preprotein-SecB complex and as an ATP-driven molecular motor driving the stepwise translocation of polypeptide chains across the membrane. The protein is Protein translocase subunit SecA of Acinetobacter baumannii (strain SDF).